Reading from the N-terminus, the 591-residue chain is Metalloendopeptidase OPG085 (591 aa).

His-41 contributes to the Zn(2+) binding site. Residue Glu-44 is part of the active site. Residue His-45 coordinates Zn(2+).

This sequence belongs to the peptidase M44 family. It depends on Zn(2+) as a cofactor. In terms of processing, undergoes proteolytic processing during the course of infection. May be cleaved into 46 kDa and 22 kDa products (Potential).

The protein resides in the virion. Functionally, probably involved in maturation of some viral proteins by processing them preferentially at Ala-Gly-|-Ser/Thr/Lys motifs. Does not seem to be responsible for the cleavage of major core proteins. This is Metalloendopeptidase OPG085 (OPG085) from Homo sapiens (Human).